We begin with the raw amino-acid sequence, 277 residues long: Thymidylate synthase (277 aa).

Arg-21 serves as a coordination point for dUMP. His-51 contacts (6R)-5,10-methylene-5,6,7,8-tetrahydrofolate. A dUMP-binding site is contributed by 126-127 (RR). Cys-159 serves as the catalytic Nucleophile. Residues 179–182 (RSAD), Asn-190, and 220–222 (HLY) contribute to the dUMP site. Asp-182 serves as a coordination point for (6R)-5,10-methylene-5,6,7,8-tetrahydrofolate. (6R)-5,10-methylene-5,6,7,8-tetrahydrofolate is bound at residue Ser-276.

Belongs to the thymidylate synthase family. Bacterial-type ThyA subfamily. In terms of assembly, homodimer.

The protein localises to the cytoplasm. It catalyses the reaction dUMP + (6R)-5,10-methylene-5,6,7,8-tetrahydrofolate = 7,8-dihydrofolate + dTMP. It participates in pyrimidine metabolism; dTTP biosynthesis. Its function is as follows. Catalyzes the reductive methylation of 2'-deoxyuridine-5'-monophosphate (dUMP) to 2'-deoxythymidine-5'-monophosphate (dTMP) while utilizing 5,10-methylenetetrahydrofolate (mTHF) as the methyl donor and reductant in the reaction, yielding dihydrofolate (DHF) as a by-product. This enzymatic reaction provides an intracellular de novo source of dTMP, an essential precursor for DNA biosynthesis. The sequence is that of Thymidylate synthase from Hydrogenovibrio crunogenus (strain DSM 25203 / XCL-2) (Thiomicrospira crunogena).